We begin with the raw amino-acid sequence, 435 residues long: 3-phosphoshikimate 1-carboxyvinyltransferase (435 aa).

3-phosphoshikimate-binding residues include Lys-22, Ser-23, and Arg-27. Lys-22 is a binding site for phosphoenolpyruvate. Phosphoenolpyruvate is bound by residues Gly-94 and Arg-122. Ser-166, Gln-168, Asp-314, and Lys-341 together coordinate 3-phosphoshikimate. Residue Gln-168 coordinates phosphoenolpyruvate. Asp-314 (proton acceptor) is an active-site residue. Phosphoenolpyruvate-binding residues include Arg-345 and Arg-388.

It belongs to the EPSP synthase family. Monomer.

The protein resides in the cytoplasm. It catalyses the reaction 3-phosphoshikimate + phosphoenolpyruvate = 5-O-(1-carboxyvinyl)-3-phosphoshikimate + phosphate. The protein operates within metabolic intermediate biosynthesis; chorismate biosynthesis; chorismate from D-erythrose 4-phosphate and phosphoenolpyruvate: step 6/7. Its function is as follows. Catalyzes the transfer of the enolpyruvyl moiety of phosphoenolpyruvate (PEP) to the 5-hydroxyl of shikimate-3-phosphate (S3P) to produce enolpyruvyl shikimate-3-phosphate and inorganic phosphate. The polypeptide is 3-phosphoshikimate 1-carboxyvinyltransferase (Vesicomyosocius okutanii subsp. Calyptogena okutanii (strain HA)).